The following is a 502-amino-acid chain: Maturase K (502 aa).

The protein belongs to the intron maturase 2 family. MatK subfamily.

It localises to the plastid. The protein localises to the chloroplast. Functionally, usually encoded in the trnK tRNA gene intron. Probably assists in splicing its own and other chloroplast group II introns. The sequence is that of Maturase K from Spiraea cantoniensis (Reeve's meadowsweet).